Reading from the N-terminus, the 722-residue chain is Bifunctional UDP-N-acetylglucosamine 2-epimerase/N-acetylmannosamine kinase (722 aa).

UDP is bound by residues R19, S23, R113, H220, and N253. The CMP-N-acetyl-beta-neuraminate site is built by K259, E271, K280, and H281. Residues V282, S301, S302, E307, and R321 each contribute to the UDP site. The segment at 406–722 (TLSALAVDLG…VLDYTTRRIH (317 aa)) is N-acetylmannosamine kinase. D413 is a Mg(2+) binding site. G416 is an an N-acyl-D-mannosamine 6-phosphate binding site. The ADP site is built by T417, N418, and R420. G476, R477, T489, N516, D517, and G545 together coordinate an N-acyl-D-mannosamine 6-phosphate. The an N-acyl-D-mannosamine site is built by G476, R477, T489, N516, and D517. Residue D517 is part of the active site. Positions 566 and 569 each coordinate an N-acyl-D-mannosamine. H569 provides a ligand contact to an N-acyl-D-mannosamine 6-phosphate. 4 residues coordinate Zn(2+): H569, C579, C581, and C586. An an N-acyl-D-mannosamine 6-phosphate-binding site is contributed by E588. An an N-acyl-D-mannosamine-binding site is contributed by E588.

This sequence in the N-terminal section; belongs to the UDP-N-acetylglucosamine 2-epimerase family. It in the C-terminal section; belongs to the ROK (NagC/XylR) family. Homodimer. Homotetramer. Homohexamer. The hexameric form exhibits both enzyme activities, whereas the dimeric form only catalyzes the phosphorylation of N-acyl-D-mannosamine. In terms of processing, phosphorylated. Phosphorylation by PKC activates the UDP-N-acetylglucosamine 2-epimerase activity.

The protein resides in the cytoplasm. It localises to the cytosol. The catalysed reaction is UDP-N-acetyl-alpha-D-glucosamine + H2O = aldehydo-N-acetyl-D-mannosamine + UDP + H(+). The enzyme catalyses an N-acyl-D-mannosamine + ATP = an N-acyl-D-mannosamine 6-phosphate + ADP + H(+). Its pathway is amino-sugar metabolism; N-acetylneuraminate biosynthesis. Its activity is regulated as follows. The UDP-N-acetylglucosamine 2-epimerase activity, in contrast to the N-acetylmannosamine kinase activity, exhibits allosteric regulation by cytidine monophosphate-N-acetylneuraminic acid (CMP-Neu5Ac), the end product of neuraminic acid biosynthesis. Moreover, the activity is contingent upon the oligomeric state of the enzyme. The monomeric form is inactive, while the dimeric form selectively catalyzes the phosphorylation of N-acetylmannosamine. The hexameric form, on the other hand, demonstrates full proficiency in both enzyme activities. Furthermore, the UDP-N-acetylglucosamine 2-epimerase activity is increased by PKC-mediated phosphorylation. Its function is as follows. Bifunctional enzyme that possesses both UDP-N-acetylglucosamine 2-epimerase and N-acetylmannosamine kinase activities, and serves as the initiator of the biosynthetic pathway leading to the production of N-acetylneuraminic acid (NeuAc), a critical precursor in the synthesis of sialic acids. By catalyzing this pivotal and rate-limiting step in sialic acid biosynthesis, this enzyme assumes a pivotal role in governing the regulation of cell surface sialylation, playing a role in embryonic angiogenesis. Sialic acids represent a category of negatively charged sugars that reside on the surface of cells as terminal components of glycoconjugates and mediate important functions in various cellular processes, including cell adhesion, signal transduction, and cellular recognition. The sequence is that of Bifunctional UDP-N-acetylglucosamine 2-epimerase/N-acetylmannosamine kinase (GNE) from Cricetulus griseus (Chinese hamster).